Reading from the N-terminus, the 475-residue chain is Ribulose bisphosphate carboxylase large chain (475 aa).

Residues 1–2 constitute a propeptide that is removed on maturation; that stretch reads MS. Residue proline 3 is modified to N-acetylproline. The residue at position 14 (lysine 14) is an N6,N6,N6-trimethyllysine. 2 residues coordinate substrate: asparagine 123 and threonine 173. Lysine 175 serves as the catalytic Proton acceptor. A substrate-binding site is contributed by lysine 177. Residues lysine 201, aspartate 203, and glutamate 204 each contribute to the Mg(2+) site. An N6-carboxylysine modification is found at lysine 201. Residue histidine 294 is the Proton acceptor of the active site. The substrate site is built by arginine 295, histidine 327, and serine 379.

Belongs to the RuBisCO large chain family. Type I subfamily. As to quaternary structure, heterohexadecamer of 8 large chains and 8 small chains; disulfide-linked. The disulfide link is formed within the large subunit homodimers. Mg(2+) is required as a cofactor. Post-translationally, the disulfide bond which can form in the large chain dimeric partners within the hexadecamer appears to be associated with oxidative stress and protein turnover.

It localises to the plastid. The protein resides in the chloroplast. It catalyses the reaction 2 (2R)-3-phosphoglycerate + 2 H(+) = D-ribulose 1,5-bisphosphate + CO2 + H2O. It carries out the reaction D-ribulose 1,5-bisphosphate + O2 = 2-phosphoglycolate + (2R)-3-phosphoglycerate + 2 H(+). RuBisCO catalyzes two reactions: the carboxylation of D-ribulose 1,5-bisphosphate, the primary event in carbon dioxide fixation, as well as the oxidative fragmentation of the pentose substrate in the photorespiration process. Both reactions occur simultaneously and in competition at the same active site. This is Ribulose bisphosphate carboxylase large chain from Vitis vinifera (Grape).